A 207-amino-acid polypeptide reads, in one-letter code: Ribonuclease HII (207 aa).

The RNase H type-2 domain occupies 20-207; it reads QLFAGVDEVG…KPVKRVLGIE (188 aa). Asp26, Glu27, and Asp118 together coordinate a divalent metal cation.

The protein belongs to the RNase HII family. Mn(2+) serves as cofactor. It depends on Mg(2+) as a cofactor.

The protein resides in the cytoplasm. The catalysed reaction is Endonucleolytic cleavage to 5'-phosphomonoester.. In terms of biological role, endonuclease that specifically degrades the RNA of RNA-DNA hybrids. This is Ribonuclease HII from Aliivibrio fischeri (strain MJ11) (Vibrio fischeri).